A 250-amino-acid polypeptide reads, in one-letter code: Troponin I 1 (250 aa).

Disordered stretches follow at residues 1–59 and 194–250; these read MSQI…ERKK and SVFT…ADEE. 2 stretches are compositionally biased toward basic and acidic residues: residues 21–45 and 206–221; these read DAQR…EAGQ and DKPE…KEES. Residues 229-250 show a composition bias toward acidic residues; the sequence is PVEEEETAASEGEEEEEEADEE.

It belongs to the troponin I family. In terms of tissue distribution, strongly expressed in body wall muscle during embryogenesis, reduces during the larval stages to adult. In late-stage larvae and adults, expression is evident in the proximal gonad of both hermaphrodites and males.

Its function is as follows. Troponin I is the inhibitory subunit of troponin, the thin filament regulatory complex which confers calcium-sensitivity to muscle actomyosin ATPase activity. The polypeptide is Troponin I 1 (tni-1) (Caenorhabditis elegans).